The following is a 443-amino-acid chain: MEKLASLYHHHLATLQTRAQAVLARHKLDALLIHSGELLTVFLDDHDYPFKVNPQFKAWVPVTQVPNCWLWIDGVNPPKLWFYSPVDYWHSVAPVPESFWTAGVEIAVLRNADDIGQLLPAQRERVAYIGYAPQRAQDLGIRADNINPQGVLDYLHYHRAYKTDYELACMREAQKTAVIGHRAAHEAFLSGMSEFDINLAYLTATGHRDIDVPYGNIIALNEHAAVLHYTQLDHQVPSDVRSFLIDAGAEYNGYAADLTRTYSAQSDGAFAQLIKDLNQEMLALIDTMQAGVRYTDYHIQMHQRIAKLLKSHQLVRDISEEAMVEQGLTLPFLPHGLGHPLGLQVHDVAGFMQDDRGTHLAAPTQHPYLRCTRVLEPGMVMTIEPGIYFIESLLAPWREGECSQHFDWQKIDALKPFGGIRIEDNIVIHEGRVENMTRDLNLA.

D246, D257, H339, E384, and E423 together coordinate Mn(2+).

Belongs to the peptidase M24B family. Bacterial-type prolidase subfamily. It depends on Mn(2+) as a cofactor.

The enzyme catalyses Xaa-L-Pro dipeptide + H2O = an L-alpha-amino acid + L-proline. Its function is as follows. Splits dipeptides with a prolyl residue in the C-terminal position. The chain is Xaa-Pro dipeptidase from Pectobacterium atrosepticum (strain SCRI 1043 / ATCC BAA-672) (Erwinia carotovora subsp. atroseptica).